The chain runs to 930 residues: Translation initiation factor IF-2 (930 aa).

Positions Phe50–Val67 are enriched in low complexity. 2 disordered regions span residues Phe50–Phe196 and Glu260–Pro346. 2 stretches are compositionally biased toward basic and acidic residues: residues Ser68–Pro90 and Phe110–Arg125. Positions Lys129–Arg141 are enriched in low complexity. Composition is skewed to basic and acidic residues over residues Arg157–Gln172 and Val262–Arg295. The span at Asn309–Asn318 shows a compositional bias: low complexity. The span at Val337–Pro346 shows a compositional bias: basic and acidic residues. Residues Glu432–Glu599 form the tr-type G domain. Residues Gly441–Thr448 are G1. Gly441 to Thr448 contacts GTP. A G2 region spans residues Gly466 to His470. Positions Asp487–Gly490 are G3. Residues Asp487–His491 and Asn541–Asp544 each bind GTP. The segment at Asn541–Asp544 is G4. Residues Ser577–Lys579 are G5.

Belongs to the TRAFAC class translation factor GTPase superfamily. Classic translation factor GTPase family. IF-2 subfamily.

The protein resides in the cytoplasm. In terms of biological role, one of the essential components for the initiation of protein synthesis. Protects formylmethionyl-tRNA from spontaneous hydrolysis and promotes its binding to the 30S ribosomal subunits. Also involved in the hydrolysis of GTP during the formation of the 70S ribosomal complex. This Streptococcus pneumoniae serotype 19F (strain G54) protein is Translation initiation factor IF-2.